Consider the following 316-residue polypeptide: Acetyl-coenzyme A carboxylase carboxyl transferase subunit alpha (316 aa).

The CoA carboxyltransferase C-terminal domain maps to 40–290 (KARKELQRIY…RERFAHHLQE (251 aa)).

The protein belongs to the AccA family. In terms of assembly, acetyl-CoA carboxylase is a heterohexamer composed of biotin carboxyl carrier protein (AccB), biotin carboxylase (AccC) and two subunits each of ACCase subunit alpha (AccA) and ACCase subunit beta (AccD).

The protein localises to the cytoplasm. It catalyses the reaction N(6)-carboxybiotinyl-L-lysyl-[protein] + acetyl-CoA = N(6)-biotinyl-L-lysyl-[protein] + malonyl-CoA. The protein operates within lipid metabolism; malonyl-CoA biosynthesis; malonyl-CoA from acetyl-CoA: step 1/1. Its function is as follows. Component of the acetyl coenzyme A carboxylase (ACC) complex. First, biotin carboxylase catalyzes the carboxylation of biotin on its carrier protein (BCCP) and then the CO(2) group is transferred by the carboxyltransferase to acetyl-CoA to form malonyl-CoA. This chain is Acetyl-coenzyme A carboxylase carboxyl transferase subunit alpha, found in Acidithiobacillus ferrooxidans (strain ATCC 23270 / DSM 14882 / CIP 104768 / NCIMB 8455) (Ferrobacillus ferrooxidans (strain ATCC 23270)).